Here is a 244-residue protein sequence, read N- to C-terminus: rRNA adenine N-6-methyltransferase (244 aa).

Residues Asn11, Ile13, Gly38, Glu59, Asp84, and Asn101 each coordinate S-adenosyl-L-methionine.

This sequence belongs to the class I-like SAM-binding methyltransferase superfamily. rRNA adenine N(6)-methyltransferase family.

The catalysed reaction is adenosine(2085) in 23S rRNA + 2 S-adenosyl-L-methionine = N(6)-dimethyladenosine(2085) in 23S rRNA + 2 S-adenosyl-L-homocysteine + 2 H(+). Its function is as follows. This protein produces a dimethylation of the adenine residue at position 2085 in 23S rRNA, resulting in reduced affinity between ribosomes and macrolide-lincosamide-streptogramin B antibiotics. This is rRNA adenine N-6-methyltransferase (ermC') from Bacillus subtilis.